The chain runs to 949 residues: Bifunctional uridylyltransferase/uridylyl-removing enzyme (949 aa).

The uridylyltransferase stretch occupies residues Met1 to Pro377. Residues Gly378 to Thr733 are uridylyl-removing. The HD domain maps to Val494–Leu610. 2 ACT domains span residues Glu734–Ala815 and Val845–Pro926. Residues Met925–Thr949 are disordered.

The protein belongs to the GlnD family. Requires Mg(2+) as cofactor.

It carries out the reaction [protein-PII]-L-tyrosine + UTP = [protein-PII]-uridylyl-L-tyrosine + diphosphate. The enzyme catalyses [protein-PII]-uridylyl-L-tyrosine + H2O = [protein-PII]-L-tyrosine + UMP + H(+). Its activity is regulated as follows. Uridylyltransferase (UTase) activity is inhibited by glutamine, while glutamine activates uridylyl-removing (UR) activity. Modifies, by uridylylation and deuridylylation, the PII regulatory proteins (GlnB and homologs), in response to the nitrogen status of the cell that GlnD senses through the glutamine level. Under low glutamine levels, catalyzes the conversion of the PII proteins and UTP to PII-UMP and PPi, while under higher glutamine levels, GlnD hydrolyzes PII-UMP to PII and UMP (deuridylylation). Thus, controls uridylylation state and activity of the PII proteins, and plays an important role in the regulation of nitrogen fixation and metabolism. This Sinorhizobium medicae (strain WSM419) (Ensifer medicae) protein is Bifunctional uridylyltransferase/uridylyl-removing enzyme.